A 393-amino-acid polypeptide reads, in one-letter code: Formate-dependent phosphoribosylglycinamide formyltransferase (393 aa).

N(1)-(5-phospho-beta-D-ribosyl)glycinamide-binding positions include glutamate 22–leucine 23 and glutamate 82. Residues arginine 114, lysine 155, serine 160–glutamine 165, glutamate 195–valine 198, and glutamate 203 each bind ATP. In terms of domain architecture, ATP-grasp spans arginine 119–leucine 308. Mg(2+) contacts are provided by glutamate 267 and glutamate 279. N(1)-(5-phospho-beta-D-ribosyl)glycinamide-binding positions include aspartate 286, lysine 356, and arginine 363 to arginine 364.

This sequence belongs to the PurK/PurT family. In terms of assembly, homodimer.

It catalyses the reaction N(1)-(5-phospho-beta-D-ribosyl)glycinamide + formate + ATP = N(2)-formyl-N(1)-(5-phospho-beta-D-ribosyl)glycinamide + ADP + phosphate + H(+). It functions in the pathway purine metabolism; IMP biosynthesis via de novo pathway; N(2)-formyl-N(1)-(5-phospho-D-ribosyl)glycinamide from N(1)-(5-phospho-D-ribosyl)glycinamide (formate route): step 1/1. Its function is as follows. Involved in the de novo purine biosynthesis. Catalyzes the transfer of formate to 5-phospho-ribosyl-glycinamide (GAR), producing 5-phospho-ribosyl-N-formylglycinamide (FGAR). Formate is provided by PurU via hydrolysis of 10-formyl-tetrahydrofolate. This chain is Formate-dependent phosphoribosylglycinamide formyltransferase, found in Mannheimia succiniciproducens (strain KCTC 0769BP / MBEL55E).